We begin with the raw amino-acid sequence, 284 residues long: MLSKQIPLGIYEKALPAGECWLERLQLAKTLGFDFVEMSVDETDDRLSRLDWSREQRLALVNAIVETGVRVPSMCLSAHRRFPLGSEDDAVRAQGLEIMRKAIQFAQDVGIRVIQLAGYDVYYQEANNETRRRFRDGLKESVEMASRAQVTLAMEIMDYPLMNSISKALGYAHYLNNPWFQLYPDIGNLSAWDNDVQMELQAGIGHIVAVHVKDTKPGVFKNVPFGEGVVDFERCFETLKQSGYCGPYLIEMWSETAEDPAAEVAKARDWVKARMAKAGMVEAA.

It belongs to the L-ribulose-5-phosphate 3-epimerase family.

The enzyme catalyses L-ribulose 5-phosphate = L-xylulose 5-phosphate. It participates in cofactor degradation; L-ascorbate degradation; D-xylulose 5-phosphate from L-ascorbate: step 3/4. Its function is as follows. Catalyzes the isomerization of L-xylulose-5-phosphate to L-ribulose-5-phosphate. Is involved in the anaerobic L-ascorbate utilization. This Escherichia coli O127:H6 (strain E2348/69 / EPEC) protein is L-ribulose-5-phosphate 3-epimerase UlaE.